A 1979-amino-acid polypeptide reads, in one-letter code: Myosin-11 (1979 aa).

Serine 2 carries the post-translational modification Blocked amino end (Ser). In terms of domain architecture, Myosin N-terminal SH3-like spans 30–80 (SAKKLVWVPSEKHGFEAASIKEEKGDEVTVELQENGKKVTLSKDDIQKMNP). Residues 84–789 (SKVEDMAELT…VLAHLEEERD (706 aa)) form the Myosin motor domain. Lysine 128 is modified (N6,N6,N6-trimethyllysine). Residue 177–184 (GESGAGKT) participates in ATP binding. Actin-binding regions lie at residues 667-689 (LTKLMTTLRNTNPNFVRCIIPNH) and 768-782 (RIGQSKIFFRTGVLA). Residues 792 to 821 (ITDVIIAFQAQCRGYLARKAFAKRQQQLTA) enclose the IQ domain. Residues 850 to 1979 (LLQVTRQEEE…DGDFNGKASE (1130 aa)) are rodlike tail (S2 and LMM domains). A coiled-coil region spans residues 850 to 1979 (LLQVTRQEEE…DGDFNGKASE (1130 aa)). 3 disordered regions span residues 1130 to 1150 (QEDLESEKAARNKAEKQKRDL), 1709 to 1736 (RKQADLEKEEMAEELASANSGRTSLQDE), and 1891 to 1979 (QLEE…KASE). Residues 1135 to 1150 (SEKAARNKAEKQKRDL) show a composition bias toward basic and acidic residues. Residues 1968–1979 (GRDGDFNGKASE) show a composition bias toward basic and acidic residues.

The protein belongs to the TRAFAC class myosin-kinesin ATPase superfamily. Myosin family. As to quaternary structure, muscle myosin is a hexameric protein that consists of 2 heavy chain subunits (MHC), 2 alkali light chain subunits (MLC) and 2 regulatory light chain subunits (MLC-2).

It localises to the cytoplasm. The protein resides in the myofibril. Functionally, muscle contraction. The sequence is that of Myosin-11 (MYH11) from Gallus gallus (Chicken).